The sequence spans 285 residues: Bifunctional protein FolD (285 aa).

NADP(+) contacts are provided by residues 165-167, serine 190, and isoleucine 231; that span reads GRS.

This sequence belongs to the tetrahydrofolate dehydrogenase/cyclohydrolase family. As to quaternary structure, homodimer.

It catalyses the reaction (6R)-5,10-methylene-5,6,7,8-tetrahydrofolate + NADP(+) = (6R)-5,10-methenyltetrahydrofolate + NADPH. The enzyme catalyses (6R)-5,10-methenyltetrahydrofolate + H2O = (6R)-10-formyltetrahydrofolate + H(+). It participates in one-carbon metabolism; tetrahydrofolate interconversion. Catalyzes the oxidation of 5,10-methylenetetrahydrofolate to 5,10-methenyltetrahydrofolate and then the hydrolysis of 5,10-methenyltetrahydrofolate to 10-formyltetrahydrofolate. This chain is Bifunctional protein FolD, found in Alkaliphilus oremlandii (strain OhILAs) (Clostridium oremlandii (strain OhILAs)).